The chain runs to 387 residues: Phosphoglycerate kinase (387 aa).

Substrate-binding positions include 21 to 23 (DLN), arginine 36, 59 to 62 (HLGR), arginine 113, and arginine 146. ATP contacts are provided by residues lysine 197, glutamate 314, and 340–343 (GGDT).

It belongs to the phosphoglycerate kinase family. In terms of assembly, monomer.

It localises to the cytoplasm. The enzyme catalyses (2R)-3-phosphoglycerate + ATP = (2R)-3-phospho-glyceroyl phosphate + ADP. Its pathway is carbohydrate degradation; glycolysis; pyruvate from D-glyceraldehyde 3-phosphate: step 2/5. In Yersinia enterocolitica serotype O:8 / biotype 1B (strain NCTC 13174 / 8081), this protein is Phosphoglycerate kinase.